The chain runs to 817 residues: Rho GTPase-activating protein gacII (817 aa).

The region spanning 20-204 is the Rho-GAP domain; that stretch reads TTIVKIGTPK…TLIEEFQYIS (185 aa). One can recognise an SH3 domain in the interval 238 to 298; sequence EDYLIAKANT…SQTYVDIIDI (61 aa). Residues 318-339 show a composition bias toward low complexity; it reads ASTILHTPPTSSSSSSSSSSSS. Disordered stretches follow at residues 318–638, 691–771, and 783–817; these read ASTI…NIPV, LGGQ…QQQQ, and LPPQ…FNKN. The segment covering 340–358 has biased composition (polar residues); sequence ILLTDNQPKLCSSTPRINN. A compositionally biased stretch (low complexity) spans 359 to 391; sequence SPSSFSPSLSSTTPQLLVQQSPRQSPRQIPSIS. The span at 396–438 shows a compositional bias: polar residues; it reads PNNTNQPSFGHGTLQRTSTGYFSSKPLSISQPINMSKPTNMSP. The segment covering 461–471 has biased composition (pro residues); the sequence is PPLPTKPPPLT. The span at 472 to 498 shows a compositional bias: low complexity; sequence IPSSSSLPTTPIKQQPQQPIQQPLTPQ. The segment covering 509–532 has biased composition (polar residues); it reads LSSSVNTANTGNCANILSPNSDRY. 3 stretches are compositionally biased toward low complexity: residues 534-568, 577-587, and 607-624; these read SSRS…SSTS, KSKSSKNSPSK, and ITTT…TIAT. Positions 625–635 are enriched in pro residues; it reads TPPPPSKPLPN. Residues 705-722 show a composition bias toward polar residues; that stretch reads KSQSSYLDNNNLPSRNTN. The segment covering 725–734 has biased composition (pro residues); the sequence is NLPPRPPPLN. Composition is skewed to low complexity over residues 735 to 744 and 752 to 771; these read IPQQQQQYKP and QSPQ…QQQQ. A compositionally biased stretch (polar residues) spans 785–803; that stretch reads PQNTNLSGKNLQRSSTSML. Residues 807–817 show a composition bias toward pro residues; it reads LPPPPFSFNKN.

The protein resides in the cytoplasm. Its function is as follows. Rho GTPase-activating protein involved in the signal transduction pathway. The protein is Rho GTPase-activating protein gacII (gacII) of Dictyostelium discoideum (Social amoeba).